The sequence spans 283 residues: Pantothenate synthetase (283 aa).

ATP is bound at residue 34 to 41 (MGALHDGH). Histidine 41 (proton donor) is an active-site residue. Residue glutamine 65 coordinates (R)-pantoate. Residue glutamine 65 coordinates beta-alanine. ATP is bound at residue 152–155 (GSKD). Glutamine 158 serves as a coordination point for (R)-pantoate. ATP contacts are provided by residues valine 181 and 189–192 (MSSR).

The protein belongs to the pantothenate synthetase family. In terms of assembly, homodimer.

The protein localises to the cytoplasm. The catalysed reaction is (R)-pantoate + beta-alanine + ATP = (R)-pantothenate + AMP + diphosphate + H(+). It participates in cofactor biosynthesis; (R)-pantothenate biosynthesis; (R)-pantothenate from (R)-pantoate and beta-alanine: step 1/1. In terms of biological role, catalyzes the condensation of pantoate with beta-alanine in an ATP-dependent reaction via a pantoyl-adenylate intermediate. This Rhodopseudomonas palustris (strain ATCC BAA-98 / CGA009) protein is Pantothenate synthetase.